A 126-amino-acid chain; its full sequence is Aspartate 1-decarboxylase 2 (126 aa).

Serine 25 serves as the catalytic Schiff-base intermediate with substrate; via pyruvic acid. Serine 25 carries the pyruvic acid (Ser) modification. Threonine 57 lines the substrate pocket. The active-site Proton donor is tyrosine 58. Residue 73–75 coordinates substrate; it reads GSA.

It belongs to the PanD family. As to quaternary structure, heterooctamer of four alpha and four beta subunits. Pyruvate is required as a cofactor. Post-translationally, is synthesized initially as an inactive proenzyme, which is activated by self-cleavage at a specific serine bond to produce a beta-subunit with a hydroxyl group at its C-terminus and an alpha-subunit with a pyruvoyl group at its N-terminus.

Its subcellular location is the cytoplasm. It carries out the reaction L-aspartate + H(+) = beta-alanine + CO2. Its pathway is cofactor biosynthesis; (R)-pantothenate biosynthesis; beta-alanine from L-aspartate: step 1/1. Catalyzes the pyruvoyl-dependent decarboxylation of aspartate to produce beta-alanine. The chain is Aspartate 1-decarboxylase 2 from Polaromonas sp. (strain JS666 / ATCC BAA-500).